Reading from the N-terminus, the 123-residue chain is Ribosome-binding factor A (123 aa).

Belongs to the RbfA family. As to quaternary structure, monomer. Binds 30S ribosomal subunits, but not 50S ribosomal subunits or 70S ribosomes.

It localises to the cytoplasm. Its function is as follows. One of several proteins that assist in the late maturation steps of the functional core of the 30S ribosomal subunit. Associates with free 30S ribosomal subunits (but not with 30S subunits that are part of 70S ribosomes or polysomes). Required for efficient processing of 16S rRNA. May interact with the 5'-terminal helix region of 16S rRNA. The chain is Ribosome-binding factor A from Ralstonia nicotianae (strain ATCC BAA-1114 / GMI1000) (Ralstonia solanacearum).